A 77-amino-acid chain; its full sequence is MANISWSHFLILMLVFSVVKKGKGDQTDKYCTIIIDPRTPCDLVDCRLSCYTGYNGVGKCIASKASRTPNCVCTYNC.

The N-terminal stretch at 1–24 (MANISWSHFLILMLVFSVVKKGKG) is a signal peptide. Intrachain disulfides connect C31–C77, C41–C60, C46–C71, and C50–C73.

The protein belongs to the DEFL family.

The protein localises to the secreted. This Arabidopsis thaliana (Mouse-ear cress) protein is Putative defensin-like protein 158 (LCR23).